Here is a 188-residue protein sequence, read N- to C-terminus: dCTP deaminase (188 aa).

Residues 111–116 (KSTYAR), 135–137 (TLE), Gln156, Tyr170, and Gln180 contribute to the dCTP site. Residue Glu137 is the Proton donor/acceptor of the active site.

This sequence belongs to the dCTP deaminase family. Homotrimer.

It catalyses the reaction dCTP + H2O + H(+) = dUTP + NH4(+). The protein operates within pyrimidine metabolism; dUMP biosynthesis; dUMP from dCTP (dUTP route): step 1/2. Catalyzes the deamination of dCTP to dUTP. The protein is dCTP deaminase of Laribacter hongkongensis (strain HLHK9).